The sequence spans 214 residues: Adenylate kinase (214 aa).

10–15 is a binding site for ATP; it reads GAGKGT. The NMP stretch occupies residues 30 to 59; the sequence is STGDMLRSAVKAGTELGLKAKALMDHGKLV. AMP-binding positions include Thr-31, Arg-36, 57–59, 85–88, and Gln-92; these read KLV and GFPR. An LID region spans residues 122–159; it reads GRRIHAPSGRVYHIKFNPPVVENKDDVTGEELTVRKDD. ATP contacts are provided by residues Arg-123 and 132-133; that span reads VY. AMP contacts are provided by Arg-156 and Arg-167. Arg-200 is a binding site for ATP.

It belongs to the adenylate kinase family. Monomer.

It localises to the cytoplasm. The enzyme catalyses AMP + ATP = 2 ADP. The protein operates within purine metabolism; AMP biosynthesis via salvage pathway; AMP from ADP: step 1/1. Catalyzes the reversible transfer of the terminal phosphate group between ATP and AMP. Plays an important role in cellular energy homeostasis and in adenine nucleotide metabolism. The protein is Adenylate kinase of Photorhabdus laumondii subsp. laumondii (strain DSM 15139 / CIP 105565 / TT01) (Photorhabdus luminescens subsp. laumondii).